Here is a 243-residue protein sequence, read N- to C-terminus: Octanoyltransferase (243 aa).

The BPL/LPL catalytic domain maps to 49–227 (PLAPQAVWLL…SLSDRFGLVW (179 aa)). Residues 91–98 (RGGEVTHH), 158–160 (AIG), and 171–173 (GLA) contribute to the substrate site. Residue C189 is the Acyl-thioester intermediate of the active site.

Belongs to the LipB family.

It localises to the cytoplasm. The enzyme catalyses octanoyl-[ACP] + L-lysyl-[protein] = N(6)-octanoyl-L-lysyl-[protein] + holo-[ACP] + H(+). It functions in the pathway protein modification; protein lipoylation via endogenous pathway; protein N(6)-(lipoyl)lysine from octanoyl-[acyl-carrier-protein]: step 1/2. Functionally, catalyzes the transfer of endogenously produced octanoic acid from octanoyl-acyl-carrier-protein onto the lipoyl domains of lipoate-dependent enzymes. Lipoyl-ACP can also act as a substrate although octanoyl-ACP is likely to be the physiological substrate. This is Octanoyltransferase from Prochlorococcus marinus (strain MIT 9313).